The primary structure comprises 284 residues: 3-oxoadipate:acetyl-CoA acetyltransferase (284 aa).

The Zn(2+) site is built by H47, H49, and E229.

Belongs to the BKACE family. It depends on Zn(2+) as a cofactor.

It catalyses the reaction 3-oxoadipate + acetyl-CoA = acetoacetate + succinyl-CoA. In terms of biological role, catalyzes the condensation of 3-oxoadipate (beta-ketoadipate) and acetyl-CoA, forming acetoacetate and succinyl-CoA. Is likely involved is the degradation of 3-oxoadipate through an alternative pathway, within catechol degradation. The protein is 3-oxoadipate:acetyl-CoA acetyltransferase of Cupriavidus necator (strain ATCC 17699 / DSM 428 / KCTC 22496 / NCIMB 10442 / H16 / Stanier 337) (Ralstonia eutropha).